Reading from the N-terminus, the 91-residue chain is DNA-directed RNA polymerase subunit Rpo11 (91 aa).

The protein belongs to the archaeal Rpo11/eukaryotic RPB11/RPC19 RNA polymerase subunit family. In terms of assembly, part of the RNA polymerase complex.

Its subcellular location is the cytoplasm. The catalysed reaction is RNA(n) + a ribonucleoside 5'-triphosphate = RNA(n+1) + diphosphate. In terms of biological role, DNA-dependent RNA polymerase (RNAP) catalyzes the transcription of DNA into RNA using the four ribonucleoside triphosphates as substrates. The protein is DNA-directed RNA polymerase subunit Rpo11 of Methanococcoides burtonii (strain DSM 6242 / NBRC 107633 / OCM 468 / ACE-M).